The chain runs to 442 residues: Serine hydroxymethyltransferase (442 aa).

Residues Tyr54, 100–102, and His236 contribute to the pyridoxal 5'-phosphate site; that span reads SGS. A disulfide bond links Cys125 and Cys364. Lys237 carries the N6-(pyridoxal phosphate)lysine modification. Gly272 contacts pyridoxal 5'-phosphate.

The protein belongs to the SHMT family. As to quaternary structure, homodimer. Requires pyridoxal 5'-phosphate as cofactor.

It localises to the cytoplasm. It is found in the mitochondrion matrix. The protein resides in the plastid. The protein localises to the apicoplast. Its subcellular location is the nucleus. The catalysed reaction is (6R)-5,10-methylene-5,6,7,8-tetrahydrofolate + glycine + H2O = (6S)-5,6,7,8-tetrahydrofolate + L-serine. Its pathway is one-carbon metabolism; tetrahydrofolate interconversion. Its activity is regulated as follows. Redox regulation; active in reducing conditions, inactive in oxidizing conditions. The reduction of the cysteine pairs allows the access binding of the tetrahydrofolate substrate to its binding site. This mechanism appears to be unique to Plasmodium species. Functionally, catalyzes the interconversion of serine to glycine accompanied with the production of 5,10-methylenetetrahydrofolate, a source of one-carbon units used by thymidylate synthase to convert dUMP to dTMP for DNA synthesis. Binds to its own mRNA and to the mRNA of bifunctional dihydrofolate reductase-thymidylate synthase (DHFR-TS) in vitro; the physiological relevance of this interaction is not clear. This chain is Serine hydroxymethyltransferase, found in Plasmodium falciparum (isolate 3D7).